A 134-amino-acid chain; its full sequence is ATP synthase epsilon chain (134 aa).

This sequence belongs to the ATPase epsilon chain family. F-type ATPases have 2 components, CF(1) - the catalytic core - and CF(0) - the membrane proton channel. CF(1) has five subunits: alpha(3), beta(3), gamma(1), delta(1), epsilon(1). CF(0) has three main subunits: a, b and c.

It localises to the cell inner membrane. Produces ATP from ADP in the presence of a proton gradient across the membrane. This chain is ATP synthase epsilon chain, found in Rhizobium meliloti (strain 1021) (Ensifer meliloti).